Here is a 392-residue protein sequence, read N- to C-terminus: Protein Wnt-1 (392 aa).

Positions 1–16 (MKCLWLLVITVLCLRC) are cleaved as a signal peptide. 11 disulfide bridges follow: C89/C100, C142/C150, C152/C179, C227/C241, C229/C236, C321/C352, C337/C347, C351/C391, C367/C382, C369/C379, and C374/C375. N99 carries N-linked (GlcNAc...) asparagine glycosylation. S233 carries O-palmitoleoyl serine; by PORCN lipidation. N338 and N368 each carry an N-linked (GlcNAc...) asparagine glycan.

This sequence belongs to the Wnt family. Post-translationally, palmitoleoylated by porcupine. The lipid group functions as a sorting signal, targeting the ligand to polarized vesicles that transport WNT-1 to unique sites at the cell surface. Depalmitoleoylated by notum, leading to inhibit Wnt signaling pathway.

Its subcellular location is the secreted. It localises to the extracellular space. It is found in the extracellular matrix. Its function is as follows. Ligand for members of the frizzled family of seven transmembrane receptors. Probable developmental protein. This Bombyx mori (Silk moth) protein is Protein Wnt-1 (WNT-1).